Reading from the N-terminus, the 472-residue chain is Glycine--tRNA ligase (472 aa).

Residues R109 and E174 each coordinate substrate. ATP contacts are provided by residues 206–208, 216–221, 293–294, and 337–340; these read RNE, FRTREF, EL, and GLTR. Substrate is bound at residue 221-225; that stretch reads FEQME. 333 to 337 is a substrate binding site; the sequence is EPAAG.

Belongs to the class-II aminoacyl-tRNA synthetase family. Homodimer.

The protein resides in the cytoplasm. The enzyme catalyses tRNA(Gly) + glycine + ATP = glycyl-tRNA(Gly) + AMP + diphosphate. In terms of biological role, catalyzes the attachment of glycine to tRNA(Gly). This is Glycine--tRNA ligase from Cutibacterium acnes (strain DSM 16379 / KPA171202) (Propionibacterium acnes).